Reading from the N-terminus, the 154-residue chain is Plastocyanin, chloroplastic (154 aa).

The transit peptide at 1–57 (MAALSSAAVTIPSMAPSAPGRRRMRSSLVVRASLGKAAGAAAVAVAASAMLAGGAMA) directs the protein to the chloroplast. Positions 58 to 154 (QEVLLGANGG…AGMVGKVTVN (97 aa)) constitute a Plastocyanin-like domain. Cu cation is bound by residues H94, C139, H142, and M147.

This sequence belongs to the plastocyanin family. It depends on Cu(2+) as a cofactor.

Its subcellular location is the plastid. It is found in the chloroplast thylakoid membrane. Functionally, participates in electron transfer between P700 and the cytochrome b6-f complex in photosystem I. The polypeptide is Plastocyanin, chloroplastic (PETE) (Oryza sativa subsp. indica (Rice)).